Reading from the N-terminus, the 340-residue chain is Guanine nucleotide-binding protein G(I)/G(S)/G(T) subunit beta-3 (340 aa).

WD repeat units follow at residues 53–83 (GHLA…IVWD), 95–125 (LRSS…SIYS), 141–170 (AHTG…ALWD), 182–212 (GHTG…KLWD), 224–254 (GHES…RLFD), 268–298 (SIIC…NIWD), and 310–340 (GHDN…KVWN).

Belongs to the WD repeat G protein beta family. As to quaternary structure, g proteins are composed of 3 units, alpha, beta and gamma. Interacts with RASD2.

The protein localises to the cytoplasm. The protein resides in the perinuclear region. In terms of biological role, guanine nucleotide-binding proteins (G proteins) are involved as a modulator or transducer in various transmembrane signaling systems. The beta and gamma chains are required for the GTPase activity, for replacement of GDP by GTP, and for G protein-effector interaction. The chain is Guanine nucleotide-binding protein G(I)/G(S)/G(T) subunit beta-3 (GNB3) from Canis lupus familiaris (Dog).